The chain runs to 238 residues: Transcriptional repressor ThaA (238 aa).

An HTH luxR-type domain is found at 169–234; that stretch reads IPGEIARVSL…HAAVKATLVG (66 aa). Residues 193–212 constitute a DNA-binding region (H-T-H motif); that stretch reads VSEISSILQMSVRNINFHIQ.

This sequence belongs to the autoinducer-regulated transcriptional regulatory protein family.

Represses thailandamide production. In Burkholderia thailandensis (strain ATCC 700388 / DSM 13276 / CCUG 48851 / CIP 106301 / E264), this protein is Transcriptional repressor ThaA.